Consider the following 512-residue polypeptide: PTS system mannitol-specific EIICB component (512 aa).

The Cytoplasmic portion of the chain corresponds to 1–28; it reads MSQTEEKKGIGRRVQAFGSFLSSMIMPN. The 333-residue stretch at 17–349 folds into the PTS EIIC type-2 domain; that stretch reads FGSFLSSMIM…MKFTREPKQD (333 aa). A helical membrane pass occupies residues 29–50; that stretch reads IGAFIAWGFIAAIFIDNGWLPN. Residues 51-54 are Extracellular-facing; sequence KDLA. A helical transmembrane segment spans residues 55–75; sequence TLAGPMITYLIPLLIAFSGGR. The Cytoplasmic segment spans residues 76–139; sequence LIYDLRGGII…QGFEMLFNNF (64 aa). The chain crosses the membrane as a helical span at residues 140–161; the sequence is SAGILGFIMTIAGFKILAPLMK. Residues 162-170 lie on the Extracellular side of the membrane; the sequence is FIMHILSVA. The chain crosses the membrane as a helical span at residues 171-191; that stretch reads VEALVHAHLLPLVSILVEPAK. Over 192–278 the chain is Cytoplasmic; the sequence is IVFLNNAINH…VLMRPLLFIA (87 aa). Residues 279-298 traverse the membrane as a helical segment; the sequence is VILGGMTGVATYQATGFGFK. Topologically, residues 299–318 are extracellular; the sequence is SPASPGSFIVYCLNAPRGEF. The helical transmembrane segment at 319 to 340 threads the bilayer; the sequence is LHMLLGVFLAALVSFVVAALIM. The Cytoplasmic segment spans residues 341-512; it reads KFTREPKQDL…LNNLKKDDQA (172 aa). The segment at 355 to 402 is disordered; it reads AQMENTKGKKSSVASKLVSSDKNVNTEENASGNVSETSSSDDDPEALL. A compositionally biased stretch (low complexity) spans 365–376; sequence SSVASKLVSSDK. Residues 380–392 show a composition bias toward polar residues; sequence TEENASGNVSETS. In terms of domain architecture, PTS EIIB type-2 spans 419–512; it reads NHVIFACDAG…LNNLKKDDQA (94 aa). Cys425 serves as the catalytic Phosphocysteine intermediate; for EIIB activity. Cys425 carries the post-translational modification Phosphocysteine; by EIIA.

Homodimer.

It is found in the cell membrane. It carries out the reaction D-mannitol(out) + N(pros)-phospho-L-histidyl-[protein] = D-mannitol 1-phosphate(in) + L-histidyl-[protein]. The phosphoenolpyruvate-dependent sugar phosphotransferase system (sugar PTS), a major carbohydrate active transport system, catalyzes the phosphorylation of incoming sugar substrates concomitantly with their translocation across the cell membrane. The enzyme II CmtAB PTS system is involved in D-mannitol transport. This is PTS system mannitol-specific EIICB component (mtlA) from Staphylococcus aureus (strain Mu50 / ATCC 700699).